A 338-amino-acid polypeptide reads, in one-letter code: Ribosomal RNA large subunit methyltransferase F (338 aa).

Residues 1–21 form a disordered region; that stretch reads MTQKKNKPTQKKKGLHPRNPH.

It belongs to the methyltransferase superfamily. METTL16/RlmF family.

The protein resides in the cytoplasm. It catalyses the reaction adenosine(1618) in 23S rRNA + S-adenosyl-L-methionine = N(6)-methyladenosine(1618) in 23S rRNA + S-adenosyl-L-homocysteine + H(+). Its function is as follows. Specifically methylates the adenine in position 1618 of 23S rRNA. In Photobacterium profundum (strain SS9), this protein is Ribosomal RNA large subunit methyltransferase F.